A 421-amino-acid chain; its full sequence is Signal recognition particle receptor FtsY (421 aa).

GTP contacts are provided by residues 228-235 (GINGAGKT), 309-313 (DTAGR), and 373-376 (TKLD).

Belongs to the GTP-binding SRP family. FtsY subfamily. Part of the signal recognition particle protein translocation system, which is composed of SRP and FtsY. SRP is a ribonucleoprotein composed of Ffh and a 4.5S RNA molecule.

It localises to the cell inner membrane. Its subcellular location is the cytoplasm. The catalysed reaction is GTP + H2O = GDP + phosphate + H(+). In terms of biological role, involved in targeting and insertion of nascent membrane proteins into the cytoplasmic membrane. Acts as a receptor for the complex formed by the signal recognition particle (SRP) and the ribosome-nascent chain (RNC). Interaction with SRP-RNC leads to the transfer of the RNC complex to the Sec translocase for insertion into the membrane, the hydrolysis of GTP by both Ffh and FtsY, and the dissociation of the SRP-FtsY complex into the individual components. The sequence is that of Signal recognition particle receptor FtsY from Neisseria meningitidis serogroup B (strain ATCC BAA-335 / MC58).